The primary structure comprises 440 residues: Protein CyaD (440 aa).

The Cytoplasmic portion of the chain corresponds to 1-55; sequence MRRALRELAARHGRVLAASWRQRHRRPAGWFDPVETEFLPSALSLQERPISPTAR. The helical transmembrane segment at 56-75 threads the bilayer; that stretch reads WLARILMALAAGALVWSVVG. Residues 76-440 lie on the Periplasmic side of the membrane; sequence KTEIVVHAAG…RHAGESLGER (365 aa).

The protein belongs to the membrane fusion protein (MFP) (TC 8.A.1) family.

The protein resides in the cell inner membrane. CyaD is necessary for transport of calmodulin-sensitive adenylate cyclase-hemolysin (cyclolysin). This Bordetella pertussis (strain ATCC 9797 / DSM 5571 / CCUG 30873 / LMG 14455 / NCTC 10739 / 18323) protein is Protein CyaD (cyaD).